Consider the following 440-residue polypeptide: Thymidine phosphorylase (440 aa).

Belongs to the thymidine/pyrimidine-nucleoside phosphorylase family. As to quaternary structure, homodimer.

The enzyme catalyses thymidine + phosphate = 2-deoxy-alpha-D-ribose 1-phosphate + thymine. The protein operates within pyrimidine metabolism; dTMP biosynthesis via salvage pathway; dTMP from thymine: step 1/2. Its function is as follows. The enzymes which catalyze the reversible phosphorolysis of pyrimidine nucleosides are involved in the degradation of these compounds and in their utilization as carbon and energy sources, or in the rescue of pyrimidine bases for nucleotide synthesis. In Escherichia coli (strain K12 / DH10B), this protein is Thymidine phosphorylase.